The sequence spans 165 residues: Chorismate pyruvate-lyase (165 aa).

Substrate-binding residues include M35, R77, L115, and E156.

It belongs to the UbiC family. Monomer.

The protein localises to the cytoplasm. The enzyme catalyses chorismate = 4-hydroxybenzoate + pyruvate. The protein operates within cofactor biosynthesis; ubiquinone biosynthesis. Its function is as follows. Removes the pyruvyl group from chorismate, with concomitant aromatization of the ring, to provide 4-hydroxybenzoate (4HB) for the ubiquinone pathway. The polypeptide is Chorismate pyruvate-lyase (Shigella sonnei (strain Ss046)).